A 290-amino-acid polypeptide reads, in one-letter code: Membrane protein insertase YidC 1 (290 aa).

The first 19 residues, 1 to 19 (MKKKALLPLFLGIMIFLAG), serve as a signal peptide directing secretion. C20 is lipidated: N-palmitoyl cysteine. C20 carries the S-diacylglycerol cysteine lipid modification. Transmembrane regions (helical) follow at residues 56–76 (FGLA…PFML), 134–154 (MLGC…YFVL), 176–196 (PDIW…VVSS), 211–231 (MVIS…ALGL), and 232–252 (YWSV…IYYS). Residues 270–290 (HNPYSKKKGKNTQVVSKKNKK) form a disordered region. The span at 280–290 (NTQVVSKKNKK) shows a compositional bias: polar residues.

The protein belongs to the OXA1/ALB3/YidC family. Type 2 subfamily.

The protein resides in the cell membrane. In terms of biological role, required for the insertion and/or proper folding and/or complex formation of integral membrane proteins into the membrane. Involved in integration of membrane proteins that insert both dependently and independently of the Sec translocase complex, as well as at least some lipoproteins. The chain is Membrane protein insertase YidC 1 from Staphylococcus epidermidis (strain ATCC 12228 / FDA PCI 1200).